The following is a 48-amino-acid chain: Sulfide dehydrogenase [flavocytochrome c] flavoprotein chain (48 aa).

Position 40–46 (40–46 (VTCPFSN)) interacts with FAD.

Dimer of one cytochrome and one flavoprotein.

The protein resides in the periplasm. The catalysed reaction is hydrogen sulfide + 2 Fe(III)-[cytochrome c] = sulfur + 2 Fe(II)-[cytochrome c] + H(+). This Chlorobaculum thiosulfatiphilum (Chlorobium limicola f.sp. thiosulfatophilum) protein is Sulfide dehydrogenase [flavocytochrome c] flavoprotein chain.